Here is a 667-residue protein sequence, read N- to C-terminus: WD40 repeat-containing protein DDB_G0271002 (667 aa).

2 WD repeats span residues 165–204 (NHGV…PQET) and 210–249 (KHKH…LLRI). Over residues 278–293 (SSNSRDNNNNNSNSNN) the composition is skewed to low complexity. Disordered stretches follow at residues 278–301 (SSNS…GIII), 316–345 (LVEN…DNDD), and 389–440 (DIIF…ATTT). The segment covering 325–345 (PMPEEEEEEEEEEVNQVDNDD) has biased composition (acidic residues). A compositionally biased stretch (low complexity) spans 400–410 (NQHQQQQQQNQ). Residues 411–428 (EIEEEGQEGQEEQEDGTE) show a composition bias toward acidic residues. Residues 429 to 440 (NENNQGTIATTT) are compositionally biased toward low complexity.

The protein is WD40 repeat-containing protein DDB_G0271002 of Dictyostelium discoideum (Social amoeba).